The chain runs to 1701 residues: Coiled-coil domain-containing protein 180 (1701 aa).

A disordered region spans residues 1 to 35 (MRGGENRPPARVQSSSEELELRHQSLDAFPGRRLP). Positions 171–198 (QRQAEHKRKSYESALASFQEEIAQVGKE) form a coiled coil. Disordered regions lie at residues 657–808 (EKPS…DKEE), 1272–1291 (HHCD…CGSR), and 1319–1354 (GFKR…KPNK). Residues 661–671 (QKRVKKLRKKQ) are compositionally biased toward basic residues. A compositionally biased stretch (basic and acidic residues) spans 672-682 (GSKEDMTRSEE). Positions 683–692 (SISSGTSTAR) are enriched in polar residues. Positions 696-705 (EVEEENDQEM) are enriched in acidic residues. Residues 755-766 (ENVKGQGEKKEE) are compositionally biased toward basic and acidic residues. The stretch at 757-804 (VKGQGEKKEESEEEDEKEEEEEEEKLEEEKEEKEAQEEQESLSVGEEE) forms a coiled coil. A compositionally biased stretch (acidic residues) spans 767–808 (SEEEDEKEEEEEEEKLEEEKEEKEAQEEQESLSVGEEEDKEE).

The sequence is that of Coiled-coil domain-containing protein 180 (CCDC180) from Homo sapiens (Human).